The sequence spans 401 residues: NADH-quinone oxidoreductase subunit D (401 aa).

The protein belongs to the complex I 49 kDa subunit family. In terms of assembly, NDH-1 is composed of 14 different subunits. Subunits NuoB, C, D, E, F, and G constitute the peripheral sector of the complex.

It is found in the cell inner membrane. The enzyme catalyses a quinone + NADH + 5 H(+)(in) = a quinol + NAD(+) + 4 H(+)(out). Functionally, NDH-1 shuttles electrons from NADH, via FMN and iron-sulfur (Fe-S) centers, to quinones in the respiratory chain. The immediate electron acceptor for the enzyme in this species is believed to be ubiquinone. Couples the redox reaction to proton translocation (for every two electrons transferred, four hydrogen ions are translocated across the cytoplasmic membrane), and thus conserves the redox energy in a proton gradient. The polypeptide is NADH-quinone oxidoreductase subunit D (Rhodopseudomonas palustris (strain HaA2)).